A 457-amino-acid chain; its full sequence is Allantoinase (457 aa).

Positions 58, 60, 145, 181, 237, and 310 each coordinate Zn(2+). Lysine 145 carries the post-translational modification N6-carboxylysine.

This sequence belongs to the metallo-dependent hydrolases superfamily. Allantoinase family. In terms of assembly, homotetramer. Zn(2+) serves as cofactor. Carboxylation allows a single lysine to coordinate two zinc ions.

The catalysed reaction is (S)-allantoin + H2O = allantoate + H(+). It functions in the pathway nitrogen metabolism; (S)-allantoin degradation; allantoate from (S)-allantoin: step 1/1. Its function is as follows. Catalyzes the conversion of allantoin (5-ureidohydantoin) to allantoic acid by hydrolytic cleavage of the five-member hydantoin ring. The chain is Allantoinase from Solibacter usitatus (strain Ellin6076).